Consider the following 452-residue polypeptide: Plasminogen-binding protein PgbA (452 aa).

A disordered region spans residues 265–452 (QEAIKEPKKA…RRKALEAGKK (188 aa)). 2 stretches are compositionally biased toward basic and acidic residues: residues 284–310 (LEEKNYQKAERKLDAKEERRYLRDERK) and 317–373 (KAME…KEPS). A compositionally biased stretch (polar residues) spans 374-391 (DGNNATQQGEKQNAPKEN). The span at 392–452 (NAQKEENKPN…RRKALEAGKK (61 aa)) shows a compositional bias: basic and acidic residues.

The protein localises to the cell surface. Functionally, binds plasminogen, specifically, and in a concentration and lysine-dependent manner. Plasminogen is the precursor of plasmin, a serine protease that cleaves fibrin, fibronectin, laminin and vitronectin. Acquisition of plasminogen/plasmin could enable H.pylori to degrade host components. The sequence is that of Plasminogen-binding protein PgbA (pgbA) from Helicobacter pylori (strain ATCC 700392 / 26695) (Campylobacter pylori).